A 268-amino-acid polypeptide reads, in one-letter code: 3-methyl-2-oxobutanoate hydroxymethyltransferase (268 aa).

Mg(2+) contacts are provided by D44 and D83. 3-methyl-2-oxobutanoate is bound by residues 44 to 45, D83, and K113; that span reads DS. E115 is a binding site for Mg(2+). Catalysis depends on E183, which acts as the Proton acceptor.

This sequence belongs to the PanB family. In terms of assembly, homodecamer; pentamer of dimers. Mg(2+) serves as cofactor.

The protein localises to the cytoplasm. It carries out the reaction 3-methyl-2-oxobutanoate + (6R)-5,10-methylene-5,6,7,8-tetrahydrofolate + H2O = 2-dehydropantoate + (6S)-5,6,7,8-tetrahydrofolate. Its pathway is cofactor biosynthesis; (R)-pantothenate biosynthesis; (R)-pantoate from 3-methyl-2-oxobutanoate: step 1/2. Its function is as follows. Catalyzes the reversible reaction in which hydroxymethyl group from 5,10-methylenetetrahydrofolate is transferred onto alpha-ketoisovalerate to form ketopantoate. This chain is 3-methyl-2-oxobutanoate hydroxymethyltransferase, found in Leptospira biflexa serovar Patoc (strain Patoc 1 / Ames).